The primary structure comprises 259 residues: HTH-type transcriptional regulator Rv1931c (259 aa).

Positions 104–121 (SHRRHRPRAGTGRRRPRH) are enriched in basic residues. The disordered stretch occupies residues 104–170 (SHRRHRPRAG…GAGGHRGRAG (67 aa)). The 84-residue stretch at 174–257 (RIGELAQRAA…GISPDQYRKA (84 aa)) folds into the HTH araC/xylS-type domain. 2 consecutive DNA-binding regions (H-T-H motif) follow at residues 176 to 197 (GELA…SDEV) and 224 to 247 (VVAI…IRRV).

Controls the expression of genes important for virulence. This Mycobacterium tuberculosis (strain ATCC 25618 / H37Rv) protein is HTH-type transcriptional regulator Rv1931c.